Consider the following 114-residue polypeptide: Fumarate reductase subunit D (114 aa).

A run of 3 helical transmembrane segments spans residues V24–L44, L50–P70, and G92–I112.

This sequence belongs to the FrdD family. Part of an enzyme complex containing four subunits: a flavoprotein (FrdA), an iron-sulfur protein (FrdB), and two hydrophobic anchor proteins (FrdC and FrdD).

Its subcellular location is the cell inner membrane. Functionally, anchors the catalytic components of the fumarate reductase complex to the cell membrane, binds quinones. In Haemophilus influenzae (strain ATCC 51907 / DSM 11121 / KW20 / Rd), this protein is Fumarate reductase subunit D.